We begin with the raw amino-acid sequence, 101 residues long: Acylphosphatase (101 aa).

Residues 11-99 enclose the Acylphosphatase-like domain; sequence SWLVKAIGRV…PRLNRFDRLP (89 aa). Active-site residues include R26 and N44.

The protein belongs to the acylphosphatase family.

It catalyses the reaction an acyl phosphate + H2O = a carboxylate + phosphate + H(+). This Polaromonas naphthalenivorans (strain CJ2) protein is Acylphosphatase (acyP).